The chain runs to 879 residues: Phosphoenolpyruvate carboxylase (879 aa).

Catalysis depends on residues His138 and Lys546.

Belongs to the PEPCase type 1 family. It depends on Mg(2+) as a cofactor.

It catalyses the reaction oxaloacetate + phosphate = phosphoenolpyruvate + hydrogencarbonate. Forms oxaloacetate, a four-carbon dicarboxylic acid source for the tricarboxylic acid cycle. In Pectobacterium carotovorum subsp. carotovorum (strain PC1), this protein is Phosphoenolpyruvate carboxylase.